The chain runs to 116 residues: MAGRSGASDTELLQVCKIIKILYQSNPCPEPTGTRQARRNRRRRWRARQRQIREISERILTSCLGRPPEPVTLQLPPLERLTLNCSEDCGTSGEKGEGSPQISLESSTILGTGTKE.

A phosphoserine; by host CK2 mark is found at Ser-5 and Ser-8. Residues 18 to 26 (IIKILYQSN) form a homomultimerization region. The Nuclear localization signal and RNA-binding (RRE) motif lies at 34 to 50 (TRQARRNRRRRWRARQR). The Nuclear export signal and binding to XPO1 signature appears at 73–84 (LQLPPLERLTLN). The tract at residues 87-116 (EDCGTSGEKGEGSPQISLESSTILGTGTKE) is disordered. Phosphoserine; by host occurs at positions 92 and 99. A compositionally biased stretch (polar residues) spans 100 to 116 (PQISLESSTILGTGTKE).

Belongs to the HIV-1 REV protein family. In terms of assembly, homomultimer; when bound to the RRE. Multimeric assembly is essential for activity and may involve XPO1. Binds to human KPNB1, XPO1, TNPO1, RANBP5 and IPO7. Interacts with the viral Integrase. Interacts with human KHDRBS1. Interacts with human NAP1; this interaction decreases Rev multimerization and stimulates its activity. Interacts with human DEAD-box helicases DDX3 and DDX24; these interactions may serve for viral RNA export to the cytoplasm and packaging, respectively. Interacts with human PSIP1; this interaction may inhibit HIV-1 DNA integration by promoting dissociation of the Integrase-LEDGF/p75 complex. Asymmetrically arginine dimethylated at one site by host PRMT6. Methylation impairs the RNA-binding activity and export of viral RNA from the nucleus to the cytoplasm. Post-translationally, phosphorylated by protein kinase CK2. Presence of, and maybe binding to the N-terminus of the regulatory beta subunit of CK2 is necessary for CK2-mediated Rev's phosphorylation.

It localises to the host nucleus. The protein localises to the host nucleolus. It is found in the host cytoplasm. Functionally, escorts unspliced or incompletely spliced viral pre-mRNAs (late transcripts) out of the nucleus of infected cells. These pre-mRNAs carry a recognition sequence called Rev responsive element (RRE) located in the env gene, that is not present in fully spliced viral mRNAs (early transcripts). This function is essential since most viral proteins are translated from unspliced or partially spliced pre-mRNAs which cannot exit the nucleus by the pathway used by fully processed cellular mRNAs. Rev itself is translated from a fully spliced mRNA that readily exits the nucleus. Rev's nuclear localization signal (NLS) binds directly to KPNB1/Importin beta-1 without previous binding to KPNA1/Importin alpha-1. KPNB1 binds to the GDP bound form of RAN (Ran-GDP) and targets Rev to the nucleus. In the nucleus, the conversion from Ran-GDP to Ran-GTP dissociates Rev from KPNB1 and allows Rev's binding to the RRE in viral pre-mRNAs. Rev multimerization on the RRE via cooperative assembly exposes its nuclear export signal (NES) to the surface. Rev can then form a complex with XPO1/CRM1 and Ran-GTP, leading to nuclear export of the complex. Conversion from Ran-GTP to Ran-GDP mediates dissociation of the Rev/RRE/XPO1/RAN complex, so that Rev can return to the nucleus for a subsequent round of export. Beside KPNB1, also seems to interact with TNPO1/Transportin-1, RANBP5/IPO5 and IPO7/RANBP7 for nuclear import. The nucleoporin-like HRB/RIP is an essential cofactor that probably indirectly interacts with Rev to release HIV RNAs from the perinuclear region to the cytoplasm. The protein is Protein Rev of Human immunodeficiency virus type 1 group M subtype H (isolate 90CF056) (HIV-1).